A 507-amino-acid chain; its full sequence is Putative histone deacetylase 2 (507 aa).

A histone deacetylase region spans residues Arg29–Gly342. His162 is a catalytic residue. The interval Glu444–Pro507 is disordered. Basic and acidic residues predominate over residues Ser482–Leu501.

The protein belongs to the histone deacetylase family. HD type 1 subfamily. In terms of assembly, may be a component of a histone deacetylase complex containing saeg-2, saeg-1 and hda-2.

The protein resides in the nucleus. The enzyme catalyses N(6)-acetyl-L-lysyl-[histone] + H2O = L-lysyl-[histone] + acetate. Functionally, probably responsible for the deacetylation of lysine residues on the N-terminal part of the core histones (H2A, H2B, H3 and H4). Histone deacetylation gives a tag for epigenetic repression and plays an important role in transcriptional regulation, cell cycle progression and developmental events. Histone deacetylases act via the formation of large multiprotein complexes. As a likely component of a histone deacetylase complex, together with saeg-1 and hda-2, functions downstream of the cAMP-dependent kinase egl-4 to regulate the expression of genes required for egg-laying and forgaging. In Caenorhabditis elegans, this protein is Putative histone deacetylase 2 (hda-2).